A 323-amino-acid chain; its full sequence is Type II restriction enzyme BsoBI (323 aa).

Residues aspartate 212, glutamate 240, and lysine 242 each contribute to the Mg(2+) site.

Homodimer.

It catalyses the reaction Endonucleolytic cleavage of DNA to give specific double-stranded fragments with terminal 5'-phosphates.. Its function is as follows. A P subtype restriction enzyme that recognizes the double-stranded sequence 5'-CYCGRG-3' and cleaves after C-1. This Geobacillus stearothermophilus (Bacillus stearothermophilus) protein is Type II restriction enzyme BsoBI.